Here is a 131-residue protein sequence, read N- to C-terminus: Small ribosomal subunit protein uS8 (131 aa).

The protein belongs to the universal ribosomal protein uS8 family. As to quaternary structure, part of the 30S ribosomal subunit. Contacts proteins S5 and S12.

Functionally, one of the primary rRNA binding proteins, it binds directly to 16S rRNA central domain where it helps coordinate assembly of the platform of the 30S subunit. The protein is Small ribosomal subunit protein uS8 of Acidithiobacillus ferrooxidans (strain ATCC 23270 / DSM 14882 / CIP 104768 / NCIMB 8455) (Ferrobacillus ferrooxidans (strain ATCC 23270)).